Reading from the N-terminus, the 265-residue chain is NAD kinase (265 aa).

The active-site Proton acceptor is the D45. NAD(+)-binding positions include 45 to 46 (DG), 122 to 123 (NE), R148, D150, 161 to 166 (TAYNKS), A185, and Q223.

Belongs to the NAD kinase family. Requires a divalent metal cation as cofactor.

It is found in the cytoplasm. It catalyses the reaction NAD(+) + ATP = ADP + NADP(+) + H(+). Functionally, involved in the regulation of the intracellular balance of NAD and NADP, and is a key enzyme in the biosynthesis of NADP. Catalyzes specifically the phosphorylation on 2'-hydroxyl of the adenosine moiety of NAD to yield NADP. The sequence is that of NAD kinase from Enterococcus faecalis (strain ATCC 700802 / V583).